Reading from the N-terminus, the 228-residue chain is Enolase-phosphatase E1 (228 aa).

It belongs to the HAD-like hydrolase superfamily. MasA/MtnC family. In terms of assembly, monomer. The cofactor is Mg(2+).

The catalysed reaction is 5-methylsulfanyl-2,3-dioxopentyl phosphate + H2O = 1,2-dihydroxy-5-(methylsulfanyl)pent-1-en-3-one + phosphate. It participates in amino-acid biosynthesis; L-methionine biosynthesis via salvage pathway; L-methionine from S-methyl-5-thio-alpha-D-ribose 1-phosphate: step 3/6. It functions in the pathway amino-acid biosynthesis; L-methionine biosynthesis via salvage pathway; L-methionine from S-methyl-5-thio-alpha-D-ribose 1-phosphate: step 4/6. Its function is as follows. Bifunctional enzyme that catalyzes the enolization of 2,3-diketo-5-methylthiopentyl-1-phosphate (DK-MTP-1-P) into the intermediate 2-hydroxy-3-keto-5-methylthiopentenyl-1-phosphate (HK-MTPenyl-1-P), which is then dephosphorylated to form the acireductone 1,2-dihydroxy-3-keto-5-methylthiopentene (DHK-MTPene). The protein is Enolase-phosphatase E1 of Picosynechococcus sp. (strain ATCC 27264 / PCC 7002 / PR-6) (Agmenellum quadruplicatum).